The following is a 458-amino-acid chain: Elongation factor 1-alpha (458 aa).

Glycine 2 bears the N,N,N-trimethylglycine mark. Lysine 3 is modified (N6,N6-dimethyllysine; alternate). Lysine 3 carries the N6-methyllysine; alternate modification. In terms of domain architecture, tr-type G spans 5–240; the sequence is KTHVNVVVIG…DAIEPPQRPT (236 aa). Residues 14-21 are G1; sequence GHVDSGKS. 14 to 21 serves as a coordination point for GTP; the sequence is GHVDSGKS. Residue lysine 30 is modified to N6-methyllysine. The G2 stretch occupies residues 70-74; sequence GITID. An N6,N6,N6-trimethyllysine modification is found at lysine 79. Residues 91–94 are G3; the sequence is DAPG. GTP-binding positions include 91 to 95 and 153 to 156; these read DAPGH and NKMD. The tract at residues 153-156 is G4; it reads NKMD. Positions 192–194 are G5; sequence SGW. N6,N6-dimethyllysine; alternate is present on lysine 316. Lysine 316 carries the post-translational modification N6-methyllysine; alternate. Position 390 is an N6-methyllysine (lysine 390).

The protein belongs to the TRAFAC class translation factor GTPase superfamily. Classic translation factor GTPase family. EF-Tu/EF-1A subfamily.

The protein localises to the cytoplasm. It participates in protein biosynthesis; polypeptide chain elongation. In terms of biological role, this protein promotes the GTP-dependent binding of aminoacyl-tRNA to the A-site of ribosomes during protein biosynthesis. The chain is Elongation factor 1-alpha (TEF1) from Meyerozyma guilliermondii (strain ATCC 6260 / CBS 566 / DSM 6381 / JCM 1539 / NBRC 10279 / NRRL Y-324) (Yeast).